Consider the following 284-residue polypeptide: Bifunctional protein FolD (284 aa).

Residues 165–167 (GRS), serine 190, and valine 231 contribute to the NADP(+) site.

This sequence belongs to the tetrahydrofolate dehydrogenase/cyclohydrolase family. In terms of assembly, homodimer.

It catalyses the reaction (6R)-5,10-methylene-5,6,7,8-tetrahydrofolate + NADP(+) = (6R)-5,10-methenyltetrahydrofolate + NADPH. The enzyme catalyses (6R)-5,10-methenyltetrahydrofolate + H2O = (6R)-10-formyltetrahydrofolate + H(+). It functions in the pathway one-carbon metabolism; tetrahydrofolate interconversion. Catalyzes the oxidation of 5,10-methylenetetrahydrofolate to 5,10-methenyltetrahydrofolate and then the hydrolysis of 5,10-methenyltetrahydrofolate to 10-formyltetrahydrofolate. This Bacillus licheniformis (strain ATCC 14580 / DSM 13 / JCM 2505 / CCUG 7422 / NBRC 12200 / NCIMB 9375 / NCTC 10341 / NRRL NRS-1264 / Gibson 46) protein is Bifunctional protein FolD.